The sequence spans 87 residues: Small ribosomal subunit protein bS20 (87 aa).

Positions 1–22 (MANIKSQIKRIGTNKKAQERNK) are disordered.

This sequence belongs to the bacterial ribosomal protein bS20 family.

Binds directly to 16S ribosomal RNA. This chain is Small ribosomal subunit protein bS20, found in Clavibacter michiganensis subsp. michiganensis (strain NCPPB 382).